We begin with the raw amino-acid sequence, 761 residues long: Putative pentatricopeptide repeat-containing protein At2g02150 (761 aa).

PPR repeat units lie at residues 141-175 (SVES…KADC), 191-225 (GFGV…RVFP), 226-260 (KTRS…GARP), 261-295 (TVFT…GLVP), 296-330 (DTVT…CCEP), 331-365 (DVIT…GLKP), 366-400 (NVVS…GLVP), 401-435 (NEYT…GVEW), 436-470 (NVVT…GVIP), 471-505 (NLAS…GIKP), 506-540 (DLLL…GIKA), 541-575 (NSLI…DIEV), 576-606 (TVVT…ISND), 612-646 (NAAI…GLVP), 647-681 (DRTA…GMKL), 682-716 (DLLA…GIHP), and 717-751 (DEVL…QLLT).

It belongs to the PPR family. P subfamily.

The sequence is that of Putative pentatricopeptide repeat-containing protein At2g02150 from Arabidopsis thaliana (Mouse-ear cress).